The sequence spans 415 residues: Mechanosensing system component YbdG (415 aa).

The Periplasmic segment spans residues 1-24 (MQDLISQVEDLAGIEIDHTTSMVM). The helical transmembrane segment at 25–45 (IFGIIFLTAVVVHIILHWVVL) threads the bilayer. Residues 46–67 (RTFEKRAIASSRLWLQIITQNK) are Cytoplasmic-facing. A helical membrane pass occupies residues 68–88 (LFHRLAFTLQGIIVNIQAVFW). Topologically, residues 89–104 (LQKGTEAADILTTCAQ) are periplasmic. A helical membrane pass occupies residues 105–125 (LWIMMYALLSVFSLLDVILNL). Topologically, residues 126–148 (AQKFPAASQLPLKGIFQGIKLIG) are cytoplasmic. The helical transmembrane segment at 149 to 169 (AILVGILMISLLIGQSPAILI) threads the bilayer. Over 170–173 (SGLG) the chain is Periplasmic. The helical transmembrane segment at 174 to 194 (AMAAVLMLVFKDPILGLVAGI) threads the bilayer. The Cytoplasmic portion of the chain corresponds to 195–415 (QLSANDMLKL…IRSLAGAFKQ (221 aa)).

It belongs to the MscS (TC 1.A.23) family. Homoheptamer.

The protein resides in the cell inner membrane. Functionally, functions as a component of a mechanosensing system that transmits signals triggered by external osmotic changes to intracellular factors. In Shigella flexneri, this protein is Mechanosensing system component YbdG (ybdG).